The primary structure comprises 1073 residues: Probable inorganic carbon transporter subunit DabA 2 (1073 aa).

Over residues 1-20 (MSSGNTSSQNHSPVNNQPTR) the composition is skewed to polar residues. The segment at 1-35 (MSSGNTSSQNHSPVNNQPTRLKSPLPALHKDTQPN) is disordered. Residues cysteine 535, aspartate 537, histidine 721, and cysteine 736 each contribute to the Zn(2+) site.

This sequence belongs to the inorganic carbon transporter (TC 9.A.2) DabA family. As to quaternary structure, forms a complex with DabB. It depends on Zn(2+) as a cofactor.

The protein resides in the cell inner membrane. Its function is as follows. Part of an energy-coupled inorganic carbon pump. In Rhodopirellula baltica (strain DSM 10527 / NCIMB 13988 / SH1), this protein is Probable inorganic carbon transporter subunit DabA 2.